We begin with the raw amino-acid sequence, 251 residues long: 5-oxoprolinase subunit A (251 aa).

It belongs to the LamB/PxpA family. In terms of assembly, forms a complex composed of PxpA, PxpB and PxpC.

The catalysed reaction is 5-oxo-L-proline + ATP + 2 H2O = L-glutamate + ADP + phosphate + H(+). In terms of biological role, catalyzes the cleavage of 5-oxoproline to form L-glutamate coupled to the hydrolysis of ATP to ADP and inorganic phosphate. The chain is 5-oxoprolinase subunit A from Paracidovorax citrulli (strain AAC00-1) (Acidovorax citrulli).